The following is a 461-amino-acid chain: Toxin CfTX-B (461 aa).

An N-terminal signal peptide occupies residues 1–24; it reads MDPRISSRLRALALLVFVISITDG. A propeptide spanning residues 25 to 31 is cleaved from the precursor; sequence IPNRAKR.

Belongs to the jellyfish toxin family. Type II subfamily. Oligomer. Post-translationally, contains 2 disulfide bonds. In terms of tissue distribution, nematocytes.

It localises to the secreted. It is found in the nematocyst. The protein resides in the target cell membrane. Its function is as follows. The fraction containing this toxin and CfTX-B shows potent hemolytic activity. This fraction causes minor effects on the cardiovascular system of anesthetized rats (at 25 ug/kg), since it has no significant effects on heart rate but produces relatively small increases in mean arterial pressure. The protein is Toxin CfTX-B of Chironex fleckeri (Australian box jellyfish).